Reading from the N-terminus, the 770-residue chain is Signal transducer and activator of transcription 3 (770 aa).

Alanine 2 carries the post-translational modification N-acetylalanine. 2 positions are modified to N6-acetyllysine: lysine 49 and lysine 87. The Essential for nuclear import signature appears at 150–162 (DVRKRVQDLEQKM). The 91-residue stretch at 580-670 (WNEGYIMGFI…DATNILVSPL (91 aa)) folds into the SH2 domain. Residues lysine 601, lysine 615, and lysine 631 each carry the allysine; alternate modification. N6-acetyllysine; alternate occurs at positions 601, 615, and 631. Residue tyrosine 640 is modified to Phosphotyrosine; by TYK2. Allysine; alternate is present on lysine 685. Lysine 685 is subject to N6-acetyllysine; alternate. Position 705 is a phosphotyrosine; by FER and PTK6 (tyrosine 705). Lysine 707 carries the post-translational modification N6-acetyllysine. The residue at position 714 (threonine 714) is a Phosphothreonine. The residue at position 727 (serine 727) is a Phosphoserine; by DYRK2, NLK, NEK6, IRAK1, RPS6KA5, ZIPK/DAPK3 and PKC/PRKCE.

It belongs to the transcription factor STAT family. Forms a homodimer or a heterodimer with a related family member (at least STAT1). Component of a promoter-binding complex composed of STAT3, NFATC3 and NFATC4; complex formation is enhanced by calcineurin. Interacts with IL31RA, NCOA1, PELP1, SIPAR, SOCS7, STATIP1 and TMF1. Interacts with IL23R in presence of IL23. Interacts (via SH2 domain) with NLK. Interacts with ARL2BP; the interaction is enhanced by LIF and JAK1 expression. Interacts with KPNA4 and KPNA5; KPNA4 may be the primary mediator of nuclear import. Interacts with CAV2; the interaction is increased on insulin-induced tyrosine phosphorylation of CAV2 and leads to STAT3 activation. Interacts with ARL2BP; interaction is enhanced with ARL2. Interacts with NEK6. Binds to CDK9 when activated and nuclear. Interacts with BMX. Interacts with ZIPK/DAPK3. Interacts with PIAS3; the interaction occurs on stimulation by IL6, CNTF or OSM and inhibits the DNA binding activity of STAT3. In prostate cancer cells, interacts with PRKCE and promotes DNA binding activity of STAT3. Interacts with STMN3, antagonizing its microtubule-destabilizing activity. Interacts with the 'Lys-129' acetylated form of BIRC5/survivin. Interacts with FER. Interacts (via SH2 domain) with EIF2AK2/PKR (via the kinase catalytic domain). Interacts with FGFR4. Interacts with INPP5F; the interaction is independent of STAT3 Tyr-705 phosphorylation status. Interacts with OCIAD1 and OCIAD2. Interacts (unphosphorylated or phosphorylated at Ser-727) with PHB1. Interacts and may form heterodimers with NHLH1. Found in a complex with SLC39A6, SLC39A10 and with the 'Ser-727' phosphorylated form of STAT3 throughout mitosis. Interacts (when acetylated) with EP300 (via bromo domain); interaction takes place following STAT3 acetylation by EP300 and promotes enhanceosome assembly. Interacts (when acetylated) with BRD2 (via bromo domain); interaction promotes STAT3 recruitment to chromatin and T-helper Th17 cell differentiation. Interacts with FAM220A/SIPAR; the interaction occurs in both the nucleus and the cytoplasm, is enhanced by IL6 and promotes STAT3 dephosphorylation. Interacts in both unphosphorylated and phosphorylated forms with FAM220A but interacts preferentially in the phosphorylated form in the nucleus. Interacts with PTPN2; the interaction is promoted by FAM220A and leads to STAT3 dephosphorylation which negatively regulates STAT3 transcriptional activator activity. Activated through tyrosine phosphorylation by BMX. Tyrosine phosphorylated in response to IL6, IL11, CNTF, LIF, KITLG/SCF, CSF1, EGF, PDGF, IFN-alpha and OSM. Activated KIT promotes phosphorylation on tyrosine residues and subsequent translocation to the nucleus. Tyrosine phosphorylated in response to constitutively activated FGFR1, FGFR2, FGFR3 and FGFR4. Phosphorylated on serine upon DNA damage, probably by ATM or ATR. Serine phosphorylation is important for the formation of stable DNA-binding STAT3 homodimers and maximal transcriptional activity. ARL2BP may participate in keeping the phosphorylated state of STAT3 within the nucleus. Tyrosine phosphorylated upon stimulation with EGF. Upon LPS challenge, phosphorylated within the nucleus by IRAK1. Phosphorylated on Ser-727 by RPS6KA5. Dephosphorylation on tyrosine residues by PTPN2 negatively regulates IL6/interleukin-6 signaling. Phosphorylation at Tyr-705 by FER, isoform M2 of PKM (PKM2) or PTK6 leads to an increase of its transcriptional activity. Phosphorylation at Tyr-705 is increased in the presence of calcineurin. Phosphorylation at Tyr-640 by TYK2 negatively regulates transcriptional activity. Post-translationally, acetylated on lysine residues by EP300/p300, promoting its activation. Acetylation at Lys-49 and Lys-87 by EP300/p300 promotes its activation. Acetylation at Lys-87 by EP300/p300 promotes its association with BRD2 and recruitment to chromatin. Deacetylated at Lys-49 and Lys-87 by HDAC1. Acetylation at Lys-685 by EP300/p300 promotes its homodimerization and activation. Deacetylated at Lys-685 by HDAC3. Acetylated on lysine residues by CREBBP. Deacetylation by LOXL3 leads to disrupt STAT3 dimerization and inhibit STAT3 transcription activity. Oxidation of lysine residues to allysine on STAT3 preferentially takes place on lysine residues that are acetylated. In terms of processing, some lysine residues are oxidized to allysine by LOXL3, leading to disrupt STAT3 dimerization and inhibit STAT3 transcription activity. Oxidation of lysine residues to allysine on STAT3 preferentially takes place on lysine residues that are acetylated. Detected in lung, heart, oviduct, ovary, uterus and kidney (at protein level). Expressed in cardiomyocytes (at protein level). Detected in ovary, oviduct, and at lower levels in uterus and lung.

Its subcellular location is the cytoplasm. The protein resides in the nucleus. Its function is as follows. Signal transducer and transcription activator that mediates cellular responses to interleukins, KITLG/SCF, LEP and other growth factors. Once activated, recruits coactivators, such as NCOA1 or MED1, to the promoter region of the target gene. May mediate cellular responses to activated FGFR1, FGFR2, FGFR3 and FGFR4. Upon activation of IL6ST/gp130 signaling by interleukin-6 (IL6), binds to the IL6-responsive elements identified in the promoters of various acute-phase protein genes. Activated by IL31 through IL31RA. Acts as a regulator of inflammatory response by regulating differentiation of naive CD4(+) T-cells into T-helper Th17 or regulatory T-cells (Treg): acetylation promotes its transcription activity and cell differentiation while deacetylation and oxidation of lysine residues by LOXL3 inhibits differentiation. Involved in cell cycle regulation by inducing the expression of key genes for the progression from G1 to S phase, such as CCND1. Mediates the effects of LEP on melanocortin production, body energy homeostasis and lactation. May play an apoptotic role by transctivating BIRC5 expression under LEP activation. Cytoplasmic STAT3 represses macroautophagy by inhibiting EIF2AK2/PKR activity. Plays a crucial role in basal beta cell functions, such as regulation of insulin secretion. Following JAK/STAT signaling activation and as part of a complex with NFATC3 and NFATC4, binds to the alpha-beta E4 promoter region of CRYAB and activates transcription in cardiomyocytes. Plays an important role in host defense in methicillin-resistant S.aureus lung infection by regulating the expression of the antimicrobial lectin REG3G. This chain is Signal transducer and activator of transcription 3 (Stat3), found in Rattus norvegicus (Rat).